The sequence spans 218 residues: Deoxyribose-phosphate aldolase (218 aa).

The active-site Proton donor/acceptor is the Asp-89. The active-site Schiff-base intermediate with acetaldehyde is the Lys-152. The active-site Proton donor/acceptor is the Lys-182.

It belongs to the DeoC/FbaB aldolase family. DeoC type 1 subfamily.

It localises to the cytoplasm. The catalysed reaction is 2-deoxy-D-ribose 5-phosphate = D-glyceraldehyde 3-phosphate + acetaldehyde. It participates in carbohydrate degradation; 2-deoxy-D-ribose 1-phosphate degradation; D-glyceraldehyde 3-phosphate and acetaldehyde from 2-deoxy-alpha-D-ribose 1-phosphate: step 2/2. Functionally, catalyzes a reversible aldol reaction between acetaldehyde and D-glyceraldehyde 3-phosphate to generate 2-deoxy-D-ribose 5-phosphate. This Kocuria rhizophila (strain ATCC 9341 / DSM 348 / NBRC 103217 / DC2201) protein is Deoxyribose-phosphate aldolase.